The sequence spans 61 residues: Small ribosomal subunit protein uS14 (61 aa).

Residues Cys24, Cys27, Cys40, and Cys43 each contribute to the Zn(2+) site.

It belongs to the universal ribosomal protein uS14 family. Zinc-binding uS14 subfamily. Part of the 30S ribosomal subunit. Contacts proteins S3 and S10. Requires Zn(2+) as cofactor.

In terms of biological role, binds 16S rRNA, required for the assembly of 30S particles and may also be responsible for determining the conformation of the 16S rRNA at the A site. This chain is Small ribosomal subunit protein uS14, found in Geotalea daltonii (strain DSM 22248 / JCM 15807 / FRC-32) (Geobacter daltonii).